Consider the following 853-residue polypeptide: Histone-lysine N-methyltransferase PRDM9 (853 aa).

The SET domain occupies 83–197 (QGLVIGRSSI…PGQEFRVWYA (115 aa)). Substrate contacts are provided by residues 127–133 (DSANSWV) and Tyr-196. The C2H2-type 1 zinc finger occupies 230–253 (CPCPFCHYSFPTLVYLHAHVKRTH). Cys-235 lines the Zn(2+) pocket. 275 to 277 (TEV) contributes to the S-adenosyl-L-methionine binding site. Positions 291 to 314 (QTQPVTESPQEQISTQNGQPIHQT) are enriched in polar residues. Residues 291-322 (QTQPVTESPQEQISTQNGQPIHQTENSDEPDA) form a disordered region. 3 C2H2-type zinc fingers span residues 337 to 360 (HACVDCGRSFLRSCHLKRHQRTIH), 366 to 388 (YCCSQCKKCFSQATGLKRHQHTH), and 405 to 428 (YPCTKCTLSFVAKINLHQHLKRHH). 341–342 (DC) is an S-adenosyl-L-methionine binding site. Positions 407, 410, 423, and 428 each coordinate Zn(2+). Residues 447–496 (EDHTEVCFDKQDPNYEPPSRGRKSTKNSLKGRGCPKKVAVGRPRGRPPKN) form a disordered region. The segment covering 450 to 459 (TEVCFDKQDP) has biased composition (basic and acidic residues). Residues 508 to 528 (PICTNCEQSFSDLETLKTHQC) form a C2H2-type 5; degenerate zinc finger. A C2H2-type 6; degenerate zinc finger spans residues 547–569 (YICGECIRAFSNLDLLKAHECIQ). 3 consecutive C2H2-type zinc fingers follow at residues 575 to 598 (YCCPHCDLYFNRMCNLRRHERTIH), 604 to 626 (YCCTVCLKSFTQSSGLKRHQQSH), and 644 to 666 (FPCAYCPFSFTDERYLYKHIRRH). The C2H2-type 10; degenerate zinc-finger motif lies at 689–711 (HSCSQCCKSFSTIKGFKNHSCFK). C2H2-type zinc fingers lie at residues 717-739 (YLCPDCGKAFSWFNSLKQHQRIH), 745-767 (YTCSQCGKSFVHSGQLNVHLRTH), 773-795 (FLCSQCGESFRQSGDLRRHEQKH), 801-823 (CQCPDCGKSFSRPQSLKAHQQLH), and 829-852 (FPCTQCGKSFTRRYHLTRHHQKMH). Residues Cys-747, Cys-750, His-763, His-767, Cys-775, Cys-778, His-791, His-795, Cys-803, Cys-806, His-819, His-823, Cys-831, Cys-834, and His-847 each contribute to the Zn(2+) site. Residues 755 to 845 (VHSGQLNVHL…KSFTRRYHLT (91 aa)) form a DNA-binding region.

This sequence belongs to the class V-like SAM-binding methyltransferase superfamily. In terms of assembly, homodimer. In terms of processing, mono-methylated; automethylated. Tri-methylated; automethylated.

It is found in the nucleus. The protein resides in the chromosome. The catalysed reaction is L-lysyl-[protein] + S-adenosyl-L-methionine = N(6)-methyl-L-lysyl-[protein] + S-adenosyl-L-homocysteine + H(+). It carries out the reaction N(6)-methyl-L-lysyl-[protein] + S-adenosyl-L-methionine = N(6),N(6)-dimethyl-L-lysyl-[protein] + S-adenosyl-L-homocysteine + H(+). The enzyme catalyses L-lysyl(4)-[histone H3] + 3 S-adenosyl-L-methionine = N(6),N(6),N(6)-trimethyl-L-lysyl(4)-[histone H3] + 3 S-adenosyl-L-homocysteine + 3 H(+). It catalyses the reaction L-lysyl(36)-[histone H3] + 3 S-adenosyl-L-methionine = N(6),N(6),N(6)-trimethyl-L-lysyl(36)-[histone H3] + 3 S-adenosyl-L-homocysteine + 3 H(+). The catalysed reaction is L-lysyl(9)-[histone H3] + 3 S-adenosyl-L-methionine = N(6),N(6),N(6)-trimethyl-L-lysyl(9)-[histone H3] + 3 S-adenosyl-L-homocysteine + 3 H(+). It carries out the reaction L-lysyl(20)-[histone H4] + S-adenosyl-L-methionine = N(6)-methyl-L-lysyl(20)-[histone H4] + S-adenosyl-L-homocysteine + H(+). The enzyme catalyses N(6)-methyl-L-lysyl(20)-[histone H4] + S-adenosyl-L-methionine = N(6),N(6)-dimethyl-L-lysyl(20)-[histone H4] + S-adenosyl-L-homocysteine + H(+). In terms of biological role, histone methyltransferase that sequentially mono-, di-, and tri-methylates both 'Lys-4' (H3K4) and 'Lys-36' (H3K36) of histone H3 to produce respectively trimethylated 'Lys-4' (H3K4me3) and trimethylated 'Lys-36' (H3K36me3) histone H3 and plays a key role in meiotic prophase by determining hotspot localization thereby promoting meiotic recombination. Can also methylate all four core histones with H3 being the best substrate and the most highly modified. Is also able, on one hand, to mono and di-methylate H4K20 and on other hand to trimethylate H3K9 with the di-methylated H3K9 as the best substrate. During meiotic prophase, binds specific DNA sequences through its zinc finger domains thereby determining hotspot localization where it promotes local H3K4me3 and H3K36me3 enrichment on the same nucleosomes through its histone methyltransferase activity. Thereby promotes double-stranded breaks (DSB) formation, at this subset of PRDM9-binding sites, that initiates meiotic recombination for the proper meiotic progression. During meiotic progression hotspot-bound PRDM9 interacts with several complexes; in early leptonema binds CDYL and EHMT2 followed by EWSR1 and CXXC1 by the end of leptonema. EWSR1 joins PRDM9 with the chromosomal axis through REC8. In this way, controls the DSB repair pathway, pairing of homologous chromosomes and sex body formation. Moreover plays a central role in the transcriptional activation of genes during early meiotic prophase thanks to H3K4me3 and H3K36me3 enrichment that represents a specific tag for epigenetic transcriptional activation. In addition performs automethylation. Acetylation and phosphorylation of histone H3 attenuate or prevent histone H3 methylation. This chain is Histone-lysine N-methyltransferase PRDM9 (prdm9), found in Danio rerio (Zebrafish).